The following is a 329-amino-acid chain: MISPVSSIPRSAHRSRPEATPYLDLTRAEWSALREKTPLPLNAEEVEKLRGLGDVIDLDEVRDIYLPLSRLLNLYVGATDGLRGALNTFLGEQGSQSGTPFVIGVAGSVAVGKSTVARLLQALLSRWPEHPRVELVTTDGFLLPTKELEARGLMSRKGFPESYDRRALTRFVADIKAGKDEVTAPVYSHLIYDIVPGQKLTVRRPDILIVEGLNVLQPALPGKDGRTRVGLADYFDFSVYVDARPEDIERWYLNRFRKLRATAFQNPSSYFRRYTQVSEDEALDYARTTWRTINKVNLLENVAPTRGRAALVVRKGPDHKVQRLSLRKL.

ATP is bound at residue 107 to 114 (GSVAVGKS).

It belongs to the prokaryotic pantothenate kinase family.

The protein localises to the cytoplasm. It catalyses the reaction (R)-pantothenate + ATP = (R)-4'-phosphopantothenate + ADP + H(+). Its pathway is cofactor biosynthesis; coenzyme A biosynthesis; CoA from (R)-pantothenate: step 1/5. This chain is Pantothenate kinase, found in Streptomyces avermitilis (strain ATCC 31267 / DSM 46492 / JCM 5070 / NBRC 14893 / NCIMB 12804 / NRRL 8165 / MA-4680).